We begin with the raw amino-acid sequence, 265 residues long: MEKRKVTIRHFLEAKGSRKLAMVTAYDYPTARLVDEAGVDGILVGDSLGMVVLGYENTLRVTLRDMVAHVAAVARARPRALVVADMPFMTYETGPRDALRAAAKLVRAGAEAVKPEGGVEIVDVVEKLTKTGVPVMGHIGLNPQRVLTLGGFRMVGKDEEARRKVLEDAKALQEAGAFALVVEFVPASLAKEVTEAVKIPTICIGAGPHCDGQILVLHDIIGLSEKPPSFAKRYADVASIIREAVAKYVAEVREGKFPTPEHYRP.

Residues Asp46 and Asp85 each contribute to the Mg(2+) site. Residues 46-47 (DS), Asp85, and Lys114 each bind 3-methyl-2-oxobutanoate. Mg(2+) is bound at residue Glu116. The Proton acceptor role is filled by Glu183.

This sequence belongs to the PanB family. In terms of assembly, homodecamer; pentamer of dimers. Mg(2+) is required as a cofactor.

It is found in the cytoplasm. It carries out the reaction 3-methyl-2-oxobutanoate + (6R)-5,10-methylene-5,6,7,8-tetrahydrofolate + H2O = 2-dehydropantoate + (6S)-5,6,7,8-tetrahydrofolate. Its pathway is cofactor biosynthesis; coenzyme A biosynthesis. In terms of biological role, catalyzes the reversible reaction in which hydroxymethyl group from 5,10-methylenetetrahydrofolate is transferred onto alpha-ketoisovalerate to form ketopantoate. The sequence is that of 3-methyl-2-oxobutanoate hydroxymethyltransferase from Pyrobaculum calidifontis (strain DSM 21063 / JCM 11548 / VA1).